Here is a 112-residue protein sequence, read N- to C-terminus: Protein ORF1 (112 aa).

Positions 1–10 are enriched in low complexity; that stretch reads MEGTDWSGWG. The segment at 1–20 is disordered; it reads MEGTDWSGWGDDSDFPWPKG. The helical transmembrane segment at 51–71 threads the bilayer; that stretch reads IAFVILIVSLFVLLLGVLLAC.

It localises to the host membrane. The chain is Protein ORF1 from Snake adenovirus serotype 1 (SnAdV-1).